Here is a 271-residue protein sequence, read N- to C-terminus: ATP synthase subunit a (271 aa).

The next 5 membrane-spanning stretches (helical) occupy residues 31–51, 89–109, 124–144, 186–206, and 216–236; these read WDTI…GLYM, FVAP…WIGV, DINL…IVSL, IFSG…VLWL, and LGVG…YYAF. The interval 247-271 is disordered; sequence DEHADGGDSSSRQASPTPLPAGQVR.

The protein belongs to the ATPase A chain family. F-type ATPases have 2 components, CF(1) - the catalytic core - and CF(0) - the membrane proton channel. CF(1) has five subunits: alpha(3), beta(3), gamma(1), delta(1), epsilon(1). CF(0) has three main subunits: a(1), b(2) and c(9-12). The alpha and beta chains form an alternating ring which encloses part of the gamma chain. CF(1) is attached to CF(0) by a central stalk formed by the gamma and epsilon chains, while a peripheral stalk is formed by the delta and b chains.

Its subcellular location is the cell membrane. In terms of biological role, key component of the proton channel; it plays a direct role in the translocation of protons across the membrane. In Acidothermus cellulolyticus (strain ATCC 43068 / DSM 8971 / 11B), this protein is ATP synthase subunit a.